We begin with the raw amino-acid sequence, 310 residues long: Carbamate kinase 1 (310 aa).

This sequence belongs to the carbamate kinase family.

The protein localises to the cytoplasm. The catalysed reaction is hydrogencarbonate + NH4(+) + ATP = carbamoyl phosphate + ADP + H2O + H(+). The protein operates within metabolic intermediate metabolism; carbamoyl phosphate degradation; CO(2) and NH(3) from carbamoyl phosphate: step 1/1. The sequence is that of Carbamate kinase 1 (arcC1) from Staphylococcus aureus (strain bovine RF122 / ET3-1).